Consider the following 87-residue polypeptide: Phosphoribosyl-ATP pyrophosphatase (87 aa).

It belongs to the PRA-PH family.

It is found in the cytoplasm. It catalyses the reaction 1-(5-phospho-beta-D-ribosyl)-ATP + H2O = 1-(5-phospho-beta-D-ribosyl)-5'-AMP + diphosphate + H(+). Its pathway is amino-acid biosynthesis; L-histidine biosynthesis; L-histidine from 5-phospho-alpha-D-ribose 1-diphosphate: step 2/9. The sequence is that of Phosphoribosyl-ATP pyrophosphatase from Saccharopolyspora erythraea (strain ATCC 11635 / DSM 40517 / JCM 4748 / NBRC 13426 / NCIMB 8594 / NRRL 2338).